The sequence spans 135 residues: Galectin-1 (135 aa).

Position 2 is an N-acetylalanine (A2). Positions 4–135 constitute a Galectin domain; that stretch reads GLVASNLNLK…DFKIKCVAFE (132 aa). An N6-acetyllysine mark is found at K13 and K29. At S30 the chain carries Phosphoserine. A beta-D-galactoside is bound by residues 45-49, H53, N62, and 69-72; these read HFNPR and WGAE. K108 bears the N6-acetyllysine; alternate mark. K108 bears the N6-succinyllysine; alternate mark. K128 is subject to N6-acetyllysine.

In terms of assembly, homodimer. Binds LGALS3BP. Interacts with CD2, CD3, CD4, CD6, CD7, CD43, ALCAM and CD45. Interacts with laminin (via poly-N-acetyllactosamine). Interacts with SUSD2. Interacts with cargo receptor TMED10; the interaction mediates the translocation from the cytoplasm into the ERGIC (endoplasmic reticulum-Golgi intermediate compartment) and thereby secretion.

Its subcellular location is the secreted. It localises to the extracellular space. It is found in the extracellular matrix. The protein resides in the cytoplasm. Functionally, lectin that binds beta-galactoside and a wide array of complex carbohydrates. Plays a role in regulating apoptosis, cell proliferation and cell differentiation. Inhibits CD45 protein phosphatase activity and therefore the dephosphorylation of Lyn kinase. Strong inducer of T-cell apoptosis. Has hemagglutinating activity towards human erythrocytes. This chain is Galectin-1, found in Capra hircus (Goat).